A 354-amino-acid polypeptide reads, in one-letter code: Probable alcohol acetyltransferase (354 aa).

Catalysis depends on charge relay system residues Ser124 and His293.

The protein belongs to the AB hydrolase superfamily.

Functionally, probable alcohol acetyltransferase that uses acetyl-CoA to synthesize acetate esters from various alcohols. Not involved in the synthesis of ethyl acetate. The polypeptide is Probable alcohol acetyltransferase (EAT2) (Cyberlindnera jadinii (strain ATCC 18201 / CBS 1600 / BCRC 20928 / JCM 3617 / NBRC 0987 / NRRL Y-1542) (Torula yeast)).